The chain runs to 282 residues: Bis(5'-nucleosyl)-tetraphosphatase, symmetrical (282 aa).

It belongs to the Ap4A hydrolase family.

The enzyme catalyses P(1),P(4)-bis(5'-adenosyl) tetraphosphate + H2O = 2 ADP + 2 H(+). Hydrolyzes diadenosine 5',5'''-P1,P4-tetraphosphate to yield ADP. The chain is Bis(5'-nucleosyl)-tetraphosphatase, symmetrical from Klebsiella pneumoniae (strain 342).